The following is a 244-amino-acid chain: Mannose-binding protein C (244 aa).

An N-terminal signal peptide occupies residues 1-18 (MSLFTSFLLLCVLTAVYA). The Collagen-like domain maps to 38–96 (GLNGFPGKDGHDGAKGEKGEPGQGLRGLQGPPGKVGPAGPPGNPGSKGATGPKGDRGES). The residue at position 43 (P43) is a 4-hydroxyproline. The tract at residues 43-99 (PGKDGHDGAKGEKGEPGQGLRGLQGPPGKVGPAGPPGNPGSKGATGPKGDRGESVEF) is disordered. The span at 45–57 (KDGHDGAKGEKGE) shows a compositional bias: basic and acidic residues. A 4-hydroxyproline mark is found at P58, P69, P78, and P81. Residues 65-74 (LQGPPGKVGP) are compositionally biased toward low complexity. A coiled-coil region spans residues 108–126 (IAALRSELRAMRKWVLLSM). The region spanning 129-241 (NVGKKYFMSS…CSDSFLVVCE (113 aa)) is the C-type lectin domain. 2 disulfide bridges follow: C151–C240 and C218–C232.

In terms of assembly, oligomeric complex of 3 or more homotrimers. Interacts with MASP1 and MASP2. Interacts with MEP1A and MEP1B and may inhibit their catalytic activity.

Its subcellular location is the secreted. Its function is as follows. Calcium-dependent lectin involved in innate immune defense. Binds mannose, fucose and N-acetylglucosamine on different microorganisms and activates the lectin complement pathway. Binds to late apoptotic cells, as well as to apoptotic blebs and to necrotic cells, but not to early apoptotic cells, facilitating their uptake by macrophages. In Rattus norvegicus (Rat), this protein is Mannose-binding protein C (Mbl2).